The chain runs to 86 residues: Neurotoxin E1x (86 aa).

Residues 1–19 (MNSLLMITACLVVIGTVWA) form the signal peptide. Residues 20–84 (KEGYLVDVKG…TWPLPNKTCG (65 aa)) form the LCN-type CS-alpha/beta domain. Cystine bridges form between C30-C83, C34-C59, C43-C64, and C47-C66. Residue C83 is modified to Cysteine amide.

The protein belongs to the long (4 C-C) scorpion toxin superfamily. Sodium channel inhibitor family. Beta subfamily. Expressed by the venom gland.

Its subcellular location is the secreted. In terms of biological role, binds to sodium channels (Nav) and inhibits the inactivation of the activated channels, thereby blocking neuronal transmission. This chain is Neurotoxin E1x, found in Centruroides sculpturatus (Arizona bark scorpion).